A 215-amino-acid polypeptide reads, in one-letter code: 3-isopropylmalate dehydratase small subunit (215 aa).

This sequence belongs to the LeuD family. LeuD type 1 subfamily. In terms of assembly, heterodimer of LeuC and LeuD.

It catalyses the reaction (2R,3S)-3-isopropylmalate = (2S)-2-isopropylmalate. Its pathway is amino-acid biosynthesis; L-leucine biosynthesis; L-leucine from 3-methyl-2-oxobutanoate: step 2/4. Functionally, catalyzes the isomerization between 2-isopropylmalate and 3-isopropylmalate, via the formation of 2-isopropylmaleate. The chain is 3-isopropylmalate dehydratase small subunit from Xanthomonas oryzae pv. oryzae (strain MAFF 311018).